The following is a 304-amino-acid chain: MWRGRDVISARDFGRRDLEELFETARYMEKYSKSRLEFLRGRVMAVAFFEPSTRTRLSFEVAMRRLGGDVIGFWGAEGTSVEKGETLVDTVKMLDAYSDVIVVRHRYEGASKLAAEVAESPVINGGDGAFNHPTQAMLDVYTMWREFGTVDGLNVGLIGDLRHARTVNSLLETLTNFRVRVYLISPEYLRPRVETIDYVQSRGLKLSFHTNVEEVIHELDVLYVVRIQKERFIDPLEYEKVKGSYRITVDMLKNARRHLIILHPLPRVDEIDHRVDATPHARYFRQAALGVPLRMALLYLILQS.

Arg54 and Thr55 together coordinate carbamoyl phosphate. Residue Lys83 participates in L-aspartate binding. Carbamoyl phosphate contacts are provided by Arg104, His132, and Gln135. Arg165 and Arg226 together coordinate L-aspartate. 2 residues coordinate carbamoyl phosphate: Leu265 and Pro266.

The protein belongs to the aspartate/ornithine carbamoyltransferase superfamily. ATCase family. As to quaternary structure, heterooligomer of catalytic and regulatory chains.

The catalysed reaction is carbamoyl phosphate + L-aspartate = N-carbamoyl-L-aspartate + phosphate + H(+). The protein operates within pyrimidine metabolism; UMP biosynthesis via de novo pathway; (S)-dihydroorotate from bicarbonate: step 2/3. Catalyzes the condensation of carbamoyl phosphate and aspartate to form carbamoyl aspartate and inorganic phosphate, the committed step in the de novo pyrimidine nucleotide biosynthesis pathway. In Pyrobaculum neutrophilum (strain DSM 2338 / JCM 9278 / NBRC 100436 / V24Sta) (Thermoproteus neutrophilus), this protein is Aspartate carbamoyltransferase catalytic subunit.